The primary structure comprises 284 residues: tRNA uridine(34) hydroxylase (284 aa).

The Rhodanese domain occupies 132–226; it reads AGRPVVMLDT…YFEEVGGAHY (95 aa). Cys-186 (cysteine persulfide intermediate) is an active-site residue.

Belongs to the TrhO family.

It carries out the reaction uridine(34) in tRNA + AH2 + O2 = 5-hydroxyuridine(34) in tRNA + A + H2O. Its function is as follows. Catalyzes oxygen-dependent 5-hydroxyuridine (ho5U) modification at position 34 in tRNAs. The sequence is that of tRNA uridine(34) hydroxylase from Burkholderia ambifaria (strain MC40-6).